We begin with the raw amino-acid sequence, 283 residues long: Pantothenate synthetase (283 aa).

30–37 (MGYLHDGH) provides a ligand contact to ATP. His37 serves as the catalytic Proton donor. Gln61 contributes to the (R)-pantoate binding site. Gln61 is a beta-alanine binding site. 148-151 (GQKD) contributes to the ATP binding site. Residue Gln154 participates in (R)-pantoate binding. An ATP-binding site is contributed by 185–188 (MSSR).

This sequence belongs to the pantothenate synthetase family. Homodimer.

The protein localises to the cytoplasm. It catalyses the reaction (R)-pantoate + beta-alanine + ATP = (R)-pantothenate + AMP + diphosphate + H(+). The protein operates within cofactor biosynthesis; (R)-pantothenate biosynthesis; (R)-pantothenate from (R)-pantoate and beta-alanine: step 1/1. Its function is as follows. Catalyzes the condensation of pantoate with beta-alanine in an ATP-dependent reaction via a pantoyl-adenylate intermediate. The polypeptide is Pantothenate synthetase (Carboxydothermus hydrogenoformans (strain ATCC BAA-161 / DSM 6008 / Z-2901)).